Here is a 78-residue protein sequence, read N- to C-terminus: Acyl carrier protein (78 aa).

One can recognise a Carrier domain in the interval 2-77 (DDLFKKIQQL…DAYEFIKSQQ (76 aa)). S37 carries the post-translational modification O-(pantetheine 4'-phosphoryl)serine.

Belongs to the acyl carrier protein (ACP) family. Post-translationally, 4'-phosphopantetheine is transferred from CoA to a specific serine of apo-ACP by AcpS. This modification is essential for activity because fatty acids are bound in thioester linkage to the sulfhydryl of the prosthetic group.

Its subcellular location is the cytoplasm. It functions in the pathway lipid metabolism; fatty acid biosynthesis. In terms of biological role, carrier of the growing fatty acid chain in fatty acid biosynthesis. The chain is Acyl carrier protein from Treponema denticola (strain ATCC 35405 / DSM 14222 / CIP 103919 / JCM 8153 / KCTC 15104).